Here is a 567-residue protein sequence, read N- to C-terminus: MAVSTNELAILAIVLLVTAVVFYTKGTRRAPLPPGPRGIPFLGNLFQFNVMRPYPQYLKWAQKYGPVFSIKLGSQRIIVLSTSEAADELFVTRSKLYSSHESPHVGFDLVSDQQRMVFMPYSREWKIVRKNVHGILGPGPSKQMRKMQDLECRIMLHDLLCHGDTSIVEDFVEGPHGKVPERHWFSIIRRYTTSLMMTLVYGRRIHRIVDNPELHQVYEMMSNMTHVSQPGRYLVDALPILRWLPDIMAPWRAEGKRMHEWEMGFWGKLFADSRTAFLNGTGLNGFVQSYLSARAEAGLEDLPGKGATEDGAGWMRDKLITYTAVSIIEAGSDTTSTAVFSFVLLMLSNPDALRRAKEEMGAVVGSSRMPDWEDEDRLPWLTACIKETLRCAPPLPLGIPHKADEDDVYNGYLIPKGSTVIGNIWAIHMDPVRYPDPTAFKPERFYNPDGKLNWASGPDTHNRDHYIFGWGRRFCSGKYLAEASMFIVLSRLIWGFDFYAASDPQTGKVKLPDVNDVDTFTDGLVTAPKIYPVGFKPRSEKHAEMIKASYRDVQNDWQSMGLAGDER.

The helical transmembrane segment at 7-24 (ELAILAIVLLVTAVVFYT) threads the bilayer. N-linked (GlcNAc...) asparagine glycans are attached at residues Asn223 and Asn279. Cys475 lines the heme pocket.

It belongs to the cytochrome P450 family. Heme serves as cofactor.

Its subcellular location is the membrane. It participates in secondary metabolite biosynthesis. Cytochrome P450 monooxygenase that is able to use dehydroabietic acid as a substrate for oxidation. The chain is Cytochrome P450 monooxygenase 79 from Postia placenta (strain ATCC 44394 / Madison 698-R) (Brown rot fungus).